Here is a 1006-residue protein sequence, read N- to C-terminus: D-2-hydroxyglutarate dehydrogenase (1006 aa).

Positions 47–279 (YQRLPQAAVF…VEAKLNVLPI (233 aa)) constitute an FAD-binding PCMH-type domain. Residues Arg397 and His495 each contribute to the (R)-2-hydroxyglutarate site. One can recognise a 4Fe-4S ferredoxin-type domain in the interval 655–687 (SHEVYDAMAGCLACKSCAGQCPIKVNVPDFRSR). 4 residues coordinate [4Fe-4S] cluster: Cys665, Cys668, Cys671, and Cys675.

This sequence in the N-terminal section; belongs to the FAD-binding oxidoreductase/transferase type 4 family. [4Fe-4S] cluster is required as a cofactor. The cofactor is FAD.

It carries out the reaction (R)-2-hydroxyglutarate + A = 2-oxoglutarate + AH2. It functions in the pathway amino-acid degradation. In terms of biological role, catalyzes the oxidation of D-2-hydroxyglutarate (D-2-HGA) to 2-oxoglutarate. Is involved in a D-lysine catabolic pathway. This is D-2-hydroxyglutarate dehydrogenase from Pseudomonas putida (strain ATCC 47054 / DSM 6125 / CFBP 8728 / NCIMB 11950 / KT2440).